The primary structure comprises 472 residues: 6-phosphogluconate dehydrogenase, decarboxylating (472 aa).

Residues 10–15 (GMAVMG), 33–35 (NRT), 74–76 (VQA), and Asn102 each bind NADP(+). Substrate-binding positions include Asn102 and 128–130 (SGG). The active-site Proton acceptor is Lys184. 187–188 (HN) is a binding site for substrate. Residue Glu191 is the Proton donor of the active site. Substrate is bound by residues Tyr192, Lys262, Arg289, Arg447, and His453.

Belongs to the 6-phosphogluconate dehydrogenase family. In terms of assembly, homodimer.

It carries out the reaction 6-phospho-D-gluconate + NADP(+) = D-ribulose 5-phosphate + CO2 + NADPH. It participates in carbohydrate degradation; pentose phosphate pathway; D-ribulose 5-phosphate from D-glucose 6-phosphate (oxidative stage): step 3/3. Functionally, catalyzes the oxidative decarboxylation of 6-phosphogluconate to ribulose 5-phosphate and CO(2), with concomitant reduction of NADP to NADPH. The protein is 6-phosphogluconate dehydrogenase, decarboxylating (gnd) of Lactococcus lactis subsp. cremoris (strain MG1363).